The sequence spans 272 residues: Indole-3-glycerol phosphate synthase (272 aa).

It belongs to the TrpC family.

The catalysed reaction is 1-(2-carboxyphenylamino)-1-deoxy-D-ribulose 5-phosphate + H(+) = (1S,2R)-1-C-(indol-3-yl)glycerol 3-phosphate + CO2 + H2O. It functions in the pathway amino-acid biosynthesis; L-tryptophan biosynthesis; L-tryptophan from chorismate: step 4/5. This is Indole-3-glycerol phosphate synthase from Arthrobacter sp. (strain FB24).